Reading from the N-terminus, the 477-residue chain is M-phase inducer phosphatase 3 (477 aa).

The segment at 1 to 20 (MSAEFFSSKREEGSLASGPS) is disordered. Ser-2 is modified (N-acetylserine). Phosphoserine occurs at positions 20 and 38. Phosphothreonine; by CDK1 is present on Thr-48. 3 positions are modified to phosphoserine: Ser-58, Ser-62, and Ser-65. A Phosphothreonine; by CDK1 modification is found at Thr-68. Ser-123 carries the post-translational modification Phosphoserine; by CDK1. Ser-130 carries the post-translational modification Phosphoserine. Thr-131 is modified (phosphothreonine). Ser-169 bears the Phosphoserine; by CDK1 mark. Phosphoserine; by PLK3 occurs at positions 192 and 199. Ser-218 carries the post-translational modification Phosphoserine; by CDK1. Ser-220 carries the post-translational modification Phosphoserine; by CHEK1, CHEK2, BRSK1, MAPK14 AND MARK3. A Rhodanese domain is found at 325-432 (LIEKFYIIDC…FFPEYMELCE (108 aa)). Cys-381 is an active-site residue. Ser-476 carries the post-translational modification Phosphoserine.

The protein belongs to the MPI phosphatase family. In terms of assembly, interacts with MAPK14 and 14-3-3 proteins. When phosphorylated on Ser-130 and/or Thr-131, interacts with PLK1. Interacts with MARK3/C-TAK1. Phosphorylated by CHEK1 and MAPK14 at Ser-220. This phosphorylation creates a binding site for 14-3-3 protein and inhibits the phosphatase. Phosphorylated by PLK4. Phosphorylated by PLK1, leading to activate the phosphatase activity. Phosphorylation by PLK3 at Ser-192 promotes nuclear translocation. Ser-199 is a minor phosphorylation site. Phosphorylation by CDK1 occurs at G2 and G2-M transition and leads to increased activity.

It is found in the nucleus. It carries out the reaction O-phospho-L-tyrosyl-[protein] + H2O = L-tyrosyl-[protein] + phosphate. Functions as a dosage-dependent inducer in mitotic control. Tyrosine protein phosphatase required for progression of the cell cycle. When phosphorylated, highly effective in activating G2 cells into prophase. Directly dephosphorylates CDK1 and activates its kinase activity. The polypeptide is M-phase inducer phosphatase 3 (CDC25C) (Bos taurus (Bovine)).